A 124-amino-acid polypeptide reads, in one-letter code: MTNVLLVALGGSIGAVLRYLLSIFMIQVFGSSFPFGTLLVNLLGSFLMGAVYALGQLSHISPEIKALIGIGLLGALTTFSTFSNETLLLLQEGLWHKAILNVLLNVTLCLFMVYLGQQLIFSRV.

Transmembrane regions (helical) follow at residues 20-40, 60-80, and 102-122; these read LLSIFMIQVFGSSFPFGTLLV, ISPEIKALIGIGLLGALTTFS, and VLLNVTLCLFMVYLGQQLIFS. Na(+) contacts are provided by G74 and T77.

It belongs to the fluoride channel Fluc/FEX (TC 1.A.43) family.

Its subcellular location is the cell inner membrane. The catalysed reaction is fluoride(in) = fluoride(out). Its activity is regulated as follows. Na(+) is not transported, but it plays an essential structural role and its presence is essential for fluoride channel function. In terms of biological role, fluoride-specific ion channel. Important for reducing fluoride concentration in the cell, thus reducing its toxicity. This is Fluoride-specific ion channel FluC from Shewanella frigidimarina (strain NCIMB 400).